A 1676-amino-acid polypeptide reads, in one-letter code: Protein TIC 214 (1676 aa).

A run of 6 helical transmembrane segments spans residues Lys-24–Leu-44, Leu-70–Phe-90, Pro-93–Leu-113, Leu-130–Phe-150, Met-170–Cys-190, and Phe-218–Leu-238. Basic and acidic residues-rich tracts occupy residues Leu-264–Thr-276 and Ser-283–Glu-298. 4 disordered regions span residues Leu-264–Glu-302, Leu-546–Ile-610, Asn-1123–Leu-1151, and Gln-1372–Asp-1436. The segment covering Asp-562–Thr-586 has biased composition (polar residues). The segment covering Thr-597–Ile-610 has biased composition (basic and acidic residues). Over residues Asn-1123–Leu-1138 the composition is skewed to polar residues. The segment covering Gln-1372–Lys-1390 has biased composition (low complexity). Positions Glu-1384–Asp-1436 form a coiled coil. Basic and acidic residues-rich tracts occupy residues Asn-1391–Glu-1402 and Thr-1409–Glu-1426.

It belongs to the TIC214 family. As to quaternary structure, part of the Tic complex.

It is found in the plastid. The protein localises to the chloroplast inner membrane. Functionally, involved in protein precursor import into chloroplasts. May be part of an intermediate translocation complex acting as a protein-conducting channel at the inner envelope. The sequence is that of Protein TIC 214 from Cuscuta obtusiflora (Peruvian dodder).